The primary structure comprises 550 residues: Methionine--tRNA ligase (550 aa).

The short motif at 13–23 (PYANGEIHLGH) is the 'HIGH' region element. Zn(2+)-binding residues include Cys144, Cys147, Cys157, and Cys160. The short motif at 329–333 (KMSKS) is the 'KMSKS' region element. Lys332 contributes to the ATP binding site.

The protein belongs to the class-I aminoacyl-tRNA synthetase family. MetG type 1 subfamily. As to quaternary structure, monomer. Requires Zn(2+) as cofactor.

The protein localises to the cytoplasm. It carries out the reaction tRNA(Met) + L-methionine + ATP = L-methionyl-tRNA(Met) + AMP + diphosphate. Functionally, is required not only for elongation of protein synthesis but also for the initiation of all mRNA translation through initiator tRNA(fMet) aminoacylation. This Ruthia magnifica subsp. Calyptogena magnifica protein is Methionine--tRNA ligase.